A 118-amino-acid polypeptide reads, in one-letter code: MICOS complex subunit MIC13 (118 aa).

The Mitochondrial matrix portion of the chain corresponds to 1–7; that stretch reads MVARVWS. The helical transmembrane segment at 8–26 threads the bilayer; that stretch reads LMRFLIKGSVAGGAVYLVY. Residues 27–118 lie on the Mitochondrial intermembrane side of the membrane; the sequence is DQELLGPSDK…GWEYVKARTK (92 aa).

This sequence belongs to the MICOS complex subunit Mic13 family. As to quaternary structure, component of the mitochondrial contact site and cristae organizing system (MICOS) complex, composed of at least MICOS10/MIC10, CHCHD3/MIC19, CHCHD6/MIC25, APOO/MIC26, MICOS13/MIC13, APOOL/MIC27 and IMMT/MIC60. The MICOS complex associates with mitochondrial outer membrane proteins SAMM50, MTX1 and MTX2 (together described as components of the mitochondrial outer membrane sorting assembly machinery (SAM) complex) and DNAJC11, mitochondrial inner membrane protein TMEM11 and with HSPA9. The MICOS and SAM complexes together with DNAJC11 are part of a large protein complex spanning both membranes termed the mitochondrial intermembrane space bridging (MIB) complex.

It is found in the mitochondrion inner membrane. Its function is as follows. Component of the MICOS complex, a large protein complex of the mitochondrial inner membrane that plays crucial roles in the maintenance of crista junctions, inner membrane architecture, and formation of contact sites to the outer membrane. Constituent of mature MICOS complex, it is required for the formation of cristae junction (CJ) and maintenance of cristae morphology. Required for the incorporation of MICOS10/MIC10 into the MICOS complex. The protein is MICOS complex subunit MIC13 of Homo sapiens (Human).